Consider the following 396-residue polypeptide: Deoxyuridine 5'-triphosphate nucleotidohydrolase (396 aa).

Residues 280–282 (RSS) and 380–381 (FG) each bind substrate.

This sequence belongs to the dUTPase family. It depends on Mg(2+) as a cofactor.

It carries out the reaction dUTP + H2O = dUMP + diphosphate + H(+). In terms of biological role, involved in nucleotide metabolism: produces dUMP, the immediate precursor of thymidine nucleotides and decreases the intracellular concentration of dUTP to avoid uracil incorporation into viral DNA. The protein is Deoxyuridine 5'-triphosphate nucleotidohydrolase of Varicella-zoster virus (strain Dumas) (HHV-3).